Here is a 194-residue protein sequence, read N- to C-terminus: Fibroblast growth factor 4 (194 aa).

An N-terminal signal peptide occupies residues 1-23 (MLSAAALLPALLLGLLWPGAVRG).

This sequence belongs to the heparin-binding growth factors family. In terms of assembly, reciprocal interactions may create a positive feedback loop between sonic hedgehog (SHH) and FGF4. In terms of tissue distribution, posterior ridge.

It localises to the secreted. Plays an important role in the regulation of embryonic development, cell proliferation, and cell differentiation. Required for normal limb development during embryogenesis. This chain is Fibroblast growth factor 4 (FGF4), found in Gallus gallus (Chicken).